The following is a 355-amino-acid chain: Double-stranded RNA-binding protein 4 (355 aa).

DRBM domains are found at residues 4 to 73 (VYKG…SLTP) and 82 to 150 (AYKN…SIKN). Residues 149 to 188 (KNGNSNQTGSPTLPSERQEDVNSNVKSSPQEIHSQPSSKV) show a composition bias toward polar residues. The disordered stretch occupies residues 149–193 (KNGNSNQTGSPTLPSERQEDVNSNVKSSPQEIHSQPSSKVVMTPD).

In terms of assembly, heterodimer with DRB1 or DRB5. Interacts with DCL4 and cauliflower mosaic virus (CaMV) transactivator/viroplasmin protein. Interaction with CaMV transactivator/viroplasmin protein inhibits RNA silencing ability of DRB4. Expressed in roots, leaf vasculature, shoot apical meristem (SAM) and developing anthers.

The protein resides in the nucleus. In terms of biological role, double-stranded RNA-binding protein involved in RNA-mediated post-transcriptional gene silencing (PTGS). Functions in the trans-acting small interfering RNAs (ta-siRNAs) biogenesis by binding and assisting DICER-LIKE 4 (DCL4). Required for DCL4 activity. Required for the 21 nucleotide ta-siRNAs production of the TAS3 transcript in leaves but not in flowers. Plays an important role in silencing RNA of both DNA and RNA viruses. Involved with argonaute 7 (AGO7) and RDR6 in turnip crinkle virus (TCV) silencing. May not be directly involved in viral siRNA production. May stabilize the 21 nucleotide viral siRNAs and deliver them to the RISC complex. Targeted by the viral silencing suppressor (VSR) transactivator/viroplasmin (TAV) protein of the cauliflower mosaic virus (CaMV) that inactivates DRB4 function in RNA silencing. Probably not involved in the guide strand selection from RNA duplexes. Involved in leaf morphology through its function in ta-siRNA-mediated silencing. The sequence is that of Double-stranded RNA-binding protein 4 (DBR4) from Arabidopsis thaliana (Mouse-ear cress).